Reading from the N-terminus, the 46-residue chain is Large ribosomal subunit protein bL34 (46 aa).

This sequence belongs to the bacterial ribosomal protein bL34 family.

The chain is Large ribosomal subunit protein bL34 from Synechococcus sp. (strain JA-2-3B'a(2-13)) (Cyanobacteria bacterium Yellowstone B-Prime).